The chain runs to 297 residues: 4,5-DOPA dioxygenase extradiol-like protein (297 aa).

Residues H30, H82, H205, and H263 each contribute to the Zn(2+) site.

Belongs to the DODA-type extradiol aromatic ring-opening dioxygenase family. Zn(2+) serves as cofactor.

The protein localises to the cytoplasm. It is found in the nucleus. Functionally, may be involved in the metabolism of aromatic compounds. This Schizosaccharomyces pombe (strain 972 / ATCC 24843) (Fission yeast) protein is 4,5-DOPA dioxygenase extradiol-like protein.